The following is a 752-amino-acid chain: Iron-sulfur clusters transporter ABCB7, mitochondrial (752 aa).

A mitochondrion-targeting transit peptide spans 1–22 (MALLAIHSWRWAAAAVAFEKHK). The Mitochondrial matrix segment spans residues 23 to 140 (HSAVLTRSLV…KDRPDLRARV (118 aa)). An ABC transmembrane type-1 domain is found at 140–436 (VAISLGFLGG…LGTVYRETRQ (297 aa)). The helical transmembrane segment at 141–161 (AISLGFLGGAKAMNIVVPFMF) threads the bilayer. Residues 162–185 (KYAVDSLNQMSGNMLNLSDAPNTV) lie on the Mitochondrial intermembrane side of the membrane. The chain crosses the membrane as a helical span at residues 186–206 (ATMATAVLIGYGVSRAGAAFF). Over 207–259 (NEVRNAVFGKVAQNSIRRIAKNVFLHLHNLDLGFHLSRQTGALSKAIDRGTRG) the chain is Mitochondrial matrix. Lys-216 and Lys-251 each carry N6-acetyllysine. Residues 260–280 (ISFVLSALVFNLLPIVFEMTL) form a helical membrane-spanning segment. At 281–290 (VSSVLYYKCG) the chain is on the mitochondrial intermembrane side. The chain crosses the membrane as a helical span at residues 291–311 (AQFALVTLGTLGAYTAFTVAV). Residues 312–382 (TRWRTRFRIE…TLAMLNFGQS (71 aa)) lie on the Mitochondrial matrix side of the membrane. 315-319 (RTRFR) contributes to the glutathione binding site. Phosphoserine is present on Ser-336. Tyr-340 carries the post-translational modification Phosphotyrosine. Residue Thr-342 is modified to Phosphothreonine. Position 350 is an N6-acetyllysine (Lys-350). Glutathione is bound at residue 378–381 (NFGQ). Residues 383–403 (AIFSVGLTAIMVLASQGIVAG) form a helical membrane-spanning segment. Residues 404–409 (ALTVGD) lie on the Mitochondrial intermembrane side of the membrane. The helical transmembrane segment at 410 to 430 (LVMVNGLLFQLSLPLNFLGTV) threads the bilayer. Gly-428 is a binding site for glutathione. Residues 431–752 (YRETRQALID…SVKGCGNCSC (322 aa)) lie on the Mitochondrial matrix side of the membrane. An ABC transporter domain is found at 472–706 (VAFDNVHFEY…SSSIYSEMWH (235 aa)). Residues Tyr-481 and 505-516 (GGSGSGKSTIVR) each bind ATP.

The protein belongs to the ABC transporter superfamily. ABCB family. Heavy Metal importer (TC 3.A.1.210) subfamily. As to quaternary structure, homodimer or heterodimer. Interacts with C10orf88/PAAT. Forms a complex with ABCB10 and FECH, where a dimeric FECH bridges ABCB7 and ABCB10 homodimers; this complex may be required for cellular iron homeostasis, mitochondrial function and heme biosynthesis. Interacts with FECH. Interacts with ATP5F1A. Interacts with COX4I1; this interaction allows the regulation of cellular iron homeostasis and cellular reactive oxygen species (ROS) levels in cardiomyocytes.

It is found in the mitochondrion inner membrane. The enzyme catalyses (glutathione)4[2Fe(III)-2S] cluster(in) + ATP + H2O = (glutathione)4[2Fe(III)-2S] cluster(out) + ADP + phosphate + H(+). Exports glutathione-coordinated iron-sulfur clusters such as [2Fe-2S]-(GS)4 cluster from the mitochondria to the cytosol in an ATP-dependent manner allowing the assembly of the cytosolic iron-sulfur (Fe/S) cluster-containing proteins and participates in iron homeostasis. Moreover, through a functional complex formed of ABCB7, FECH and ABCB10, also plays a role in the cellular iron homeostasis, mitochondrial function and heme biosynthesis. In cardiomyocytes, regulates cellular iron homeostasis and cellular reactive oxygen species (ROS) levels through its interaction with COX4I1. May also play a role in hematopoiesis. The protein is Iron-sulfur clusters transporter ABCB7, mitochondrial of Rattus norvegicus (Rat).